Reading from the N-terminus, the 409-residue chain is Adenosine deaminase (409 aa).

Residues histidine 65, histidine 67, histidine 207, and aspartate 314 each coordinate Zn(2+).

It belongs to the metallo-dependent hydrolases superfamily. The cofactor is Zn(2+).

It carries out the reaction adenosine + H2O + H(+) = inosine + NH4(+). Its function is as follows. Catalyzes the deamination of adenosine into inosine. Is also able to deaminate adenine, but with considerably less efficiency. Is not active toward 6-chloroadenine. The sequence is that of Adenosine deaminase from Helicobacter pylori (strain ATCC 700392 / 26695) (Campylobacter pylori).